Reading from the N-terminus, the 202-residue chain is ATP-dependent Clp protease proteolytic subunit (202 aa).

Ser106 functions as the Nucleophile in the catalytic mechanism. His131 is a catalytic residue.

It belongs to the peptidase S14 family. In terms of assembly, fourteen ClpP subunits assemble into 2 heptameric rings which stack back to back to give a disk-like structure with a central cavity, resembling the structure of eukaryotic proteasomes.

Its subcellular location is the cytoplasm. The enzyme catalyses Hydrolysis of proteins to small peptides in the presence of ATP and magnesium. alpha-casein is the usual test substrate. In the absence of ATP, only oligopeptides shorter than five residues are hydrolyzed (such as succinyl-Leu-Tyr-|-NHMec, and Leu-Tyr-Leu-|-Tyr-Trp, in which cleavage of the -Tyr-|-Leu- and -Tyr-|-Trp bonds also occurs).. Cleaves peptides in various proteins in a process that requires ATP hydrolysis. Has a chymotrypsin-like activity. Plays a major role in the degradation of misfolded proteins. In Methylibium petroleiphilum (strain ATCC BAA-1232 / LMG 22953 / PM1), this protein is ATP-dependent Clp protease proteolytic subunit.